The following is a 752-amino-acid chain: Multifunctional tryptophan biosynthesis protein (752 aa).

Positions 3 to 202 (FTLLIDNYDS…IQMKGGKWGG (200 aa)) constitute a Glutamine amidotransferase type-1 domain. 58–60 (GPG) provides a ligand contact to L-glutamine. Cysteine 86 functions as the Nucleophile; for GATase activity in the catalytic mechanism. 136 to 137 (SL) provides a ligand contact to L-glutamine. Residues histidine 176 and glutamate 178 each act as for GATase activity in the active site. The indole-3-glycerol phosphate synthase stretch occupies residues 231–495 (ILNRIHAQRL…DTKAFLRSLI (265 aa)). Residues 509-752 (LVKICGIRST…VEAFVKAVRG (244 aa)) are N-(5'-phosphoribosyl)anthranilate isomerase.

The enzyme catalyses N-(5-phospho-beta-D-ribosyl)anthranilate = 1-(2-carboxyphenylamino)-1-deoxy-D-ribulose 5-phosphate. The catalysed reaction is 1-(2-carboxyphenylamino)-1-deoxy-D-ribulose 5-phosphate + H(+) = (1S,2R)-1-C-(indol-3-yl)glycerol 3-phosphate + CO2 + H2O. It catalyses the reaction chorismate + L-glutamine = anthranilate + pyruvate + L-glutamate + H(+). It participates in amino-acid biosynthesis; L-tryptophan biosynthesis; L-tryptophan from chorismate: step 1/5. The protein operates within amino-acid biosynthesis; L-tryptophan biosynthesis; L-tryptophan from chorismate: step 3/5. Its pathway is amino-acid biosynthesis; L-tryptophan biosynthesis; L-tryptophan from chorismate: step 4/5. Functionally, trifunctional enzyme bearing the Gln amidotransferase (GATase) domain of anthranilate synthase, indole-glycerolphosphate synthase, and phosphoribosylanthranilate isomerase activities. In Cryptococcus neoformans var. neoformans serotype D (strain B-3501A) (Filobasidiella neoformans), this protein is Multifunctional tryptophan biosynthesis protein (TRP1).